The sequence spans 137 residues: MPTINQLVRKPRQSKVVKSKSPALNVGYNSHKKVQTNVSSPQKRGVATRVGTMTPKKPNSALRKFARVRLSNLIEVTAYIPGIGHNLQEHSVVLIRGGRVKDLPGVRYHIVRGALDTAGVADRKQSRSKYGAKRPKG.

The interval 33-57 (KVQTNVSSPQKRGVATRVGTMTPKK) is disordered. 3-methylthioaspartic acid is present on Asp-102.

The protein belongs to the universal ribosomal protein uS12 family. Part of the 30S ribosomal subunit. Contacts proteins S8 and S17. May interact with IF1 in the 30S initiation complex.

Functionally, with S4 and S5 plays an important role in translational accuracy. Its function is as follows. Interacts with and stabilizes bases of the 16S rRNA that are involved in tRNA selection in the A site and with the mRNA backbone. Located at the interface of the 30S and 50S subunits, it traverses the body of the 30S subunit contacting proteins on the other side and probably holding the rRNA structure together. The combined cluster of proteins S8, S12 and S17 appears to hold together the shoulder and platform of the 30S subunit. The sequence is that of Small ribosomal subunit protein uS12 from Streptococcus thermophilus (strain CNRZ 1066).